The chain runs to 502 residues: mRNA cap guanine-N(7) methyltransferase (502 aa).

The tract at residues 1-118 (MADENPQAQG…SQQEEAMRFS (118 aa)) is disordered. Positions 93-115 (LVDRETLRRRQEERERSQQEEAM) are enriched in basic and acidic residues. In terms of domain architecture, mRNA cap 0 methyltransferase spans 146 to 502 (SKIKGLRSFN…FYHAFCFYKV (357 aa)). 155-156 (NN) is a binding site for mRNA. Residues K159, G202, D226, D264, 307–309 (MFT), and Y312 each bind S-adenosyl-L-methionine. Positions 360-369 (ERETAAKKEE) are enriched in basic and acidic residues. The disordered stretch occupies residues 360 to 381 (ERETAAKKEEAEPEDGEVEEDD). Residues 370 to 381 (AEPEDGEVEEDD) show a composition bias toward acidic residues.

Belongs to the class I-like SAM-binding methyltransferase superfamily. mRNA cap 0 methyltransferase family.

Its subcellular location is the nucleus. The enzyme catalyses a 5'-end (5'-triphosphoguanosine)-ribonucleoside in mRNA + S-adenosyl-L-methionine = a 5'-end (N(7)-methyl 5'-triphosphoguanosine)-ribonucleoside in mRNA + S-adenosyl-L-homocysteine. Responsible for methylating the 5'-cap structure of mRNAs. The chain is mRNA cap guanine-N(7) methyltransferase (abd1) from Aspergillus oryzae (strain ATCC 42149 / RIB 40) (Yellow koji mold).